Consider the following 496-residue polypeptide: Iroquois-class homeodomain protein irx-4 (496 aa).

Residues 141–203 (GSTRRKNATR…NARRRLKKEN (63 aa)) constitute a DNA-binding region (homeobox; TALE-type). Residues 203–236 (NKMTWPPRNKCSDEKRPYDEEEEEEEEEDSQKAT) are disordered. Acidic residues predominate over residues 221–231 (DEEEEEEEEED).

This sequence belongs to the TALE/IRO homeobox family. In terms of tissue distribution, expressed in the neural plate in overlapping patterns with other irx members, which all share an anterior border of expression. Broadly expressed in the tailbud rhombencephalon (hindbrain). Outside the nervous system and at tailbud stages, expressed in the developing otic vesicle, branchial arches and prospective heart region.

It is found in the nucleus. In terms of biological role, acts partially redundantly with other irx members in neural patterning. Required for formation of the posterior forebrain, midbrain, hindbrain, and to a lesser extent, spinal cord. Patterns the neuroectoderm in both the anterior/posterior and dorsal/ventral axes. Does not appear to play a role in pronephros kidney development. The protein is Iroquois-class homeodomain protein irx-4 of Xenopus tropicalis (Western clawed frog).